The sequence spans 367 residues: DNA polymerase IV (367 aa).

The region spanning 14 to 198 is the UmuC domain; that stretch reads IIHIDMDAFF…LPIEKFHGVG (185 aa). The Mg(2+) site is built by D18 and D116. The active site involves E117.

The protein belongs to the DNA polymerase type-Y family. Monomer. It depends on Mg(2+) as a cofactor.

It is found in the cytoplasm. It carries out the reaction DNA(n) + a 2'-deoxyribonucleoside 5'-triphosphate = DNA(n+1) + diphosphate. In terms of biological role, poorly processive, error-prone DNA polymerase involved in untargeted mutagenesis. Copies undamaged DNA at stalled replication forks, which arise in vivo from mismatched or misaligned primer ends. These misaligned primers can be extended by PolIV. Exhibits no 3'-5' exonuclease (proofreading) activity. May be involved in translesional synthesis, in conjunction with the beta clamp from PolIII. The chain is DNA polymerase IV from Streptococcus thermophilus (strain CNRZ 1066).